Consider the following 429-residue polypeptide: MSSVVVVGTQWGDEGKGKITDFLSEHAEVVARYQGGNNAGHTIVFGGVKYKLHLIPSGIFYKEKICVIGNGLVVDPKALLEELKYLHDRGVSTDNLRVSNRAHVILPYHLKQDELEEASKGDNKIGTTKKGIGPAYMDKAARIGIRMADLLDREAFKEKLEQNLAQKNRLFEKMYDTEGFSVDEIFEEYFEYGQQIAQYVCDTSVVLNDALDNNHRVLFEGAQGVMLDIDHGTYPFVTSSNPIAGGVTVGTGVGPAKVTRVVGVCKAYTSRVGDGPFPTELHDEIGHQIREVGREYGTTTGRPRRVGWFDSVVVRHARRVSGLTDLSLNSIDVLTGIPTLKICVAYKCDGKVIDEVPANLNILAKCEPVYEELPGWTEDITGVRSLDELPENARKYVERVSELTGIQLSMFSVGPDRNQTNIVRNVYEA.

GTP contacts are provided by residues 12 to 18 (GDEGKGK) and 40 to 42 (GHT). Residue aspartate 13 is the Proton acceptor of the active site. The Mg(2+) site is built by aspartate 13 and glycine 40. IMP-binding positions include 13–16 (DEGK), 38–41 (NAGH), threonine 128, arginine 142, glutamine 223, threonine 238, and arginine 302. Residue histidine 41 is the Proton donor of the active site. Residue 298–304 (TTTGRPR) coordinates substrate. GTP contacts are provided by residues arginine 304, 330–332 (SID), and 412–414 (SVG).

Belongs to the adenylosuccinate synthetase family. Homodimer. Mg(2+) serves as cofactor.

The protein resides in the cytoplasm. The catalysed reaction is IMP + L-aspartate + GTP = N(6)-(1,2-dicarboxyethyl)-AMP + GDP + phosphate + 2 H(+). It functions in the pathway purine metabolism; AMP biosynthesis via de novo pathway; AMP from IMP: step 1/2. Its function is as follows. Plays an important role in the de novo pathway of purine nucleotide biosynthesis. Catalyzes the first committed step in the biosynthesis of AMP from IMP. The protein is Adenylosuccinate synthetase of Bacillus thuringiensis (strain Al Hakam).